A 174-amino-acid chain; its full sequence is RNA pyrophosphohydrolase (174 aa).

Residues 6-149 (GFRANVGIII…KRDVYRKVMK (144 aa)) form the Nudix hydrolase domain. The short motif at 38 to 59 (GGVDDGESAEEAMYRELYEEVG) is the Nudix box element.

Belongs to the Nudix hydrolase family. RppH subfamily. A divalent metal cation is required as a cofactor.

Its function is as follows. Accelerates the degradation of transcripts by removing pyrophosphate from the 5'-end of triphosphorylated RNA, leading to a more labile monophosphorylated state that can stimulate subsequent ribonuclease cleavage. The chain is RNA pyrophosphohydrolase from Shewanella sp. (strain ANA-3).